Here is a 357-residue protein sequence, read N- to C-terminus: MIALPQDRMDQLLKRFSMIESQMANNPDSETYVKLASEYSELQEVVGKIRELTDSRKEAVDLAAMRDDASTDAEMRALALEELPGVEKRIEGLEQEVQILLLPKDAADEKNAILEIRAGTGGLEAALFAGDLFRMYERYAAEKGWRVELVSASEGDAGGYKEIIATVSGKGVFSKLKFESGVHRVQRVPETEAGGRIHTSAATVAVLPEAEDIDIEIRNEDIRIDTMRASGAGGQHVNTTDSAVRITHIPTGIMVVQAEKSQHQNRARAMQILRARLYDMERQKADTERSESRRSQVGSGDRSERIRTYNFPQGRVTDHRINLTLYKLDRVMEGDLDELVDALISDHQTALLTELGH.

Q235 bears the N5-methylglutamine mark. Over residues 282 to 294 (RQKADTERSESRR) the composition is skewed to basic and acidic residues. Residues 282–308 (RQKADTERSESRRSQVGSGDRSERIRT) form a disordered region.

Belongs to the prokaryotic/mitochondrial release factor family. Post-translationally, methylated by PrmC. Methylation increases the termination efficiency of RF1.

It is found in the cytoplasm. Peptide chain release factor 1 directs the termination of translation in response to the peptide chain termination codons UAG and UAA. The polypeptide is Peptide chain release factor 1 (Brucella anthropi (strain ATCC 49188 / DSM 6882 / CCUG 24695 / JCM 21032 / LMG 3331 / NBRC 15819 / NCTC 12168 / Alc 37) (Ochrobactrum anthropi)).